Reading from the N-terminus, the 87-residue chain is Down syndrome critical region protein 10 (87 aa).

In terms of tissue distribution, expressed in placenta and testis.

This is Down syndrome critical region protein 10 (DSCR10) from Homo sapiens (Human).